Consider the following 92-residue polypeptide: YcgL domain-containing protein ASA_2166 (92 aa).

A YcgL domain is found at 1–85; the sequence is MLCAVYKSRK…PPENLLEQHK (85 aa).

This chain is YcgL domain-containing protein ASA_2166, found in Aeromonas salmonicida (strain A449).